The primary structure comprises 67 residues: UPF0434 protein Lcho_2556 (67 aa).

Belongs to the UPF0434 family.

In Leptothrix cholodnii (strain ATCC 51168 / LMG 8142 / SP-6) (Leptothrix discophora (strain SP-6)), this protein is UPF0434 protein Lcho_2556.